Consider the following 258-residue polypeptide: Imidazole glycerol phosphate synthase subunit HisF (258 aa).

Residues aspartate 12 and aspartate 131 contribute to the active site.

Belongs to the HisA/HisF family. In terms of assembly, heterodimer of HisH and HisF.

It is found in the cytoplasm. The catalysed reaction is 5-[(5-phospho-1-deoxy-D-ribulos-1-ylimino)methylamino]-1-(5-phospho-beta-D-ribosyl)imidazole-4-carboxamide + L-glutamine = D-erythro-1-(imidazol-4-yl)glycerol 3-phosphate + 5-amino-1-(5-phospho-beta-D-ribosyl)imidazole-4-carboxamide + L-glutamate + H(+). The protein operates within amino-acid biosynthesis; L-histidine biosynthesis; L-histidine from 5-phospho-alpha-D-ribose 1-diphosphate: step 5/9. Functionally, IGPS catalyzes the conversion of PRFAR and glutamine to IGP, AICAR and glutamate. The HisF subunit catalyzes the cyclization activity that produces IGP and AICAR from PRFAR using the ammonia provided by the HisH subunit. In Sinorhizobium medicae (strain WSM419) (Ensifer medicae), this protein is Imidazole glycerol phosphate synthase subunit HisF.